Reading from the N-terminus, the 334-residue chain is Stabilizer of axonemal microtubules 3 (334 aa).

3 disordered regions span residues 81–105 (AYVP…PTRT), 128–153 (YQSS…YFGP), and 233–260 (QVWS…RVPR). Positions 128-141 (YQSSETRAQYTGSP) are enriched in polar residues. Positions 240–251 (QRPPCPRSSRPP) are enriched in pro residues.

The sequence is that of Stabilizer of axonemal microtubules 3 from Homo sapiens (Human).